Reading from the N-terminus, the 422-residue chain is Histidine--tRNA ligase (422 aa).

It belongs to the class-II aminoacyl-tRNA synthetase family. In terms of assembly, homodimer.

The protein localises to the cytoplasm. The enzyme catalyses tRNA(His) + L-histidine + ATP = L-histidyl-tRNA(His) + AMP + diphosphate + H(+). The chain is Histidine--tRNA ligase from Aliivibrio fischeri (strain ATCC 700601 / ES114) (Vibrio fischeri).